The sequence spans 735 residues: Protostadienol synthase A (735 aa).

The PFTB 1 repeat unit spans residues Lys129 to Gly170. Catalysis depends on Asp460, which acts as the Proton donor. PFTB repeat units lie at residues Leu487 to Val528, Met564 to Gly604, and Cys613 to Gly660.

This sequence belongs to the terpene cyclase/mutase family.

The catalysed reaction is (S)-2,3-epoxysqualene = (17Z)-protosta-17(20),24-dien-3beta-ol. Its function is as follows. Protostadienol synthase which cyclizes (3S)-oxidosqualene to (17Z)-protosta-17(20),24-dien-3-beta-ol (protostadienol), the biosynthetic precursor of helvolic acid, a secondary metabolite which promotes virulence. The sequence is that of Protostadienol synthase A (PDSA) from Arthroderma gypseum (strain ATCC MYA-4604 / CBS 118893) (Microsporum gypseum).